Reading from the N-terminus, the 523-residue chain is 2-isopropylmalate synthase (523 aa).

In terms of domain architecture, Pyruvate carboxyltransferase spans 5-267 (VIIFDTTLRD…HTNINHHEIW (263 aa)). Residues D14, H202, H204, and N238 each contribute to the Mn(2+) site. Residues 392-523 (RLDYFSVQSG…QNKENNKETV (132 aa)) form a regulatory domain region.

Belongs to the alpha-IPM synthase/homocitrate synthase family. LeuA type 1 subfamily. Homodimer. Mn(2+) is required as a cofactor.

The protein resides in the cytoplasm. It carries out the reaction 3-methyl-2-oxobutanoate + acetyl-CoA + H2O = (2S)-2-isopropylmalate + CoA + H(+). The protein operates within amino-acid biosynthesis; L-leucine biosynthesis; L-leucine from 3-methyl-2-oxobutanoate: step 1/4. Catalyzes the condensation of the acetyl group of acetyl-CoA with 3-methyl-2-oxobutanoate (2-ketoisovalerate) to form 3-carboxy-3-hydroxy-4-methylpentanoate (2-isopropylmalate). The protein is 2-isopropylmalate synthase of Salmonella typhi.